A 23-amino-acid chain; its full sequence is Thylakoid lumenal 17.4 kDa protein (23 aa).

Residues 1 to 23 are disordered; it reads ANQRLPPLSNDPDRCERAFVGNT.

It localises to the plastid. The protein resides in the chloroplast thylakoid lumen. The sequence is that of Thylakoid lumenal 17.4 kDa protein from Spinacia oleracea (Spinach).